The sequence spans 460 residues: UDP-N-acetylmuramoyl-tripeptide--D-alanyl-D-alanine ligase (460 aa).

115 to 121 (GSSGKTS) is an ATP binding site.

Belongs to the MurCDEF family. MurF subfamily.

The protein resides in the cytoplasm. It carries out the reaction D-alanyl-D-alanine + UDP-N-acetyl-alpha-D-muramoyl-L-alanyl-gamma-D-glutamyl-meso-2,6-diaminopimelate + ATP = UDP-N-acetyl-alpha-D-muramoyl-L-alanyl-gamma-D-glutamyl-meso-2,6-diaminopimeloyl-D-alanyl-D-alanine + ADP + phosphate + H(+). Its pathway is cell wall biogenesis; peptidoglycan biosynthesis. Involved in cell wall formation. Catalyzes the final step in the synthesis of UDP-N-acetylmuramoyl-pentapeptide, the precursor of murein. The protein is UDP-N-acetylmuramoyl-tripeptide--D-alanyl-D-alanine ligase of Buchnera aphidicola subsp. Baizongia pistaciae (strain Bp).